Consider the following 1342-residue polypeptide: Cytokinesis protein sepH (1342 aa).

Positions 1 to 10 (MVSRSSEGAE) are enriched in low complexity. Residues 1 to 47 (MVSRSSEGAEGPPPSAPKPPNTPAKSRLSRLGSSPSKREDKSRDDRM) are disordered. The span at 11 to 22 (GPPPSAPKPPNT) shows a compositional bias: pro residues. Basic and acidic residues predominate over residues 36-47 (SKREDKSRDDRM). The region spanning 61-308 (YQLGDCLGKG…ARKLLKHPWI (248 aa)) is the Protein kinase domain. ATP is bound by residues 67–75 (LGKGAFGSV) and lysine 90. The active-site Proton acceptor is the aspartate 180. Disordered regions lie at residues 336 to 396 (NEAL…EEDN), 441 to 486 (IKSD…QLQE), and 552 to 591 (ADEN…ISVK). Residues 369-379 (KDTLPSPVSRN) show a composition bias toward polar residues. A coiled-coil region spans residues 658 to 695 (FAQLEEGLDEMDLEANIARDKHARLRNQVEGLVSSLKT). Residues 1201 to 1342 (SEAYGMGKRK…QTQADADWTP (142 aa)) form a disordered region. A compositionally biased stretch (basic residues) spans 1207-1217 (GKRKPMVRRRS). 2 stretches are compositionally biased toward polar residues: residues 1218–1244 (TSAT…SQSK) and 1273–1290 (DGST…TGAS). The span at 1315–1324 (RPSSSLSRRQ) shows a compositional bias: low complexity.

This sequence belongs to the protein kinase superfamily. Ser/Thr protein kinase family. CDC7 subfamily. Mg(2+) serves as cofactor.

The enzyme catalyses L-seryl-[protein] + ATP = O-phospho-L-seryl-[protein] + ADP + H(+). It catalyses the reaction L-threonyl-[protein] + ATP = O-phospho-L-threonyl-[protein] + ADP + H(+). Required for early events during cytokinesis including localization of cytoskeletal components to the cytokinetic ring. This chain is Cytokinesis protein sepH, found in Aspergillus terreus (strain NIH 2624 / FGSC A1156).